Reading from the N-terminus, the 269-residue chain is tRNA pseudouridine synthase A (269 aa).

The active-site Nucleophile is D51. Residue Y109 coordinates substrate.

The protein belongs to the tRNA pseudouridine synthase TruA family. As to quaternary structure, homodimer.

It carries out the reaction uridine(38/39/40) in tRNA = pseudouridine(38/39/40) in tRNA. Functionally, formation of pseudouridine at positions 38, 39 and 40 in the anticodon stem and loop of transfer RNAs. In Haemophilus influenzae (strain ATCC 51907 / DSM 11121 / KW20 / Rd), this protein is tRNA pseudouridine synthase A.